The primary structure comprises 61 residues: Cecropin-D (61 aa).

The first 22 residues, 1–22, serve as a signal peptide directing secretion; it reads MKFSKIFVFVFAIVFATASVSA. A propeptide spans 23-24 (removed by a dipeptidylpeptidase); it reads AP. Glutamine amide is present on glutamine 60.

The protein belongs to the cecropin family. As to expression, mainly in fat body. Lower in hemocytes. Not expressed in midguts, malpighian tubules and silk glands.

The protein resides in the secreted. Its function is as follows. Cecropins have lytic and antibacterial activity against several Gram-positive and Gram-negative bacteria. The protein is Cecropin-D (CECD) of Bombyx mori (Silk moth).